The chain runs to 172 residues: Probable calcium-binding protein CML28 (172 aa).

EF-hand domains follow at residues 1-36, 37-72, 95-130, and 133-168; these read MDST…FGIF, IPDD…ILGD, DEDE…LGLK, and RTAD…GGFA. Ca(2+)-binding residues include D14, N16, D18, R20, E25, D50, N52, D54, C56, E61, D108, N110, D112, E119, D146, D148, D150, R152, and E157.

In terms of biological role, potential calcium sensor. The sequence is that of Probable calcium-binding protein CML28 (CML28) from Oryza sativa subsp. japonica (Rice).